Consider the following 208-residue polypeptide: Uracil phosphoribosyltransferase (208 aa).

5-phospho-alpha-D-ribose 1-diphosphate-binding positions include R78, R103, and 130 to 138 (DPMLATGGS). Uracil contacts are provided by residues I193 and 198–200 (GDA). A 5-phospho-alpha-D-ribose 1-diphosphate-binding site is contributed by D199.

The protein belongs to the UPRTase family. Mg(2+) is required as a cofactor.

The enzyme catalyses UMP + diphosphate = 5-phospho-alpha-D-ribose 1-diphosphate + uracil. Its pathway is pyrimidine metabolism; UMP biosynthesis via salvage pathway; UMP from uracil: step 1/1. Its activity is regulated as follows. Allosterically activated by GTP. Functionally, catalyzes the conversion of uracil and 5-phospho-alpha-D-ribose 1-diphosphate (PRPP) to UMP and diphosphate. This Acholeplasma laidlawii (strain PG-8A) protein is Uracil phosphoribosyltransferase.